Reading from the N-terminus, the 436-residue chain is UPF0229 protein Meso_0256 (436 aa).

A disordered region spans residues 53 to 110 (PMPARGTSEPTFRPDRSSGERGYILPGNKEFAPGDRLPKPGASGGEGGTGAGRGGSDD). The span at 94-106 (ASGGEGGTGAGRG) shows a compositional bias: gly residues.

It belongs to the UPF0229 family.

This is UPF0229 protein Meso_0256 from Chelativorans sp. (strain BNC1).